We begin with the raw amino-acid sequence, 580 residues long: Probable mediator of RNA polymerase II transcription subunit 26a (580 aa).

The region spanning 108–183 (DEVMRIRDIL…AEWKRLVDQW (76 aa)) is the TFIIS N-terminal domain. Basic and acidic residues-rich tracts occupy residues 244-255 (RHSVESKHERKS), 280-290 (QTRREEADVRP), and 299-309 (VEPKRQTKQSR). The disordered stretch occupies residues 244 to 337 (RHSVESKHER…RKLAGPQQDK (94 aa)). The stretch at 347–368 (FEFAKRKLQESYHQHENAKRQR) forms a coiled coil.

The protein belongs to the Mediator complex subunit 26 family. As to quaternary structure, component of the Mediator complex.

Its subcellular location is the nucleus. Its function is as follows. Component of the Mediator complex, a coactivator involved in the regulated transcription of nearly all RNA polymerase II-dependent genes. Mediator functions as a bridge to convey information from gene-specific regulatory proteins to the basal RNA polymerase II transcription machinery. The Mediator complex, having a compact conformation in its free form, is recruited to promoters by direct interactions with regulatory proteins and serves for the assembly of a functional preinitiation complex with RNA polymerase II and the general transcription factors. May play a role in transcription elongation. The protein is Probable mediator of RNA polymerase II transcription subunit 26a (MED26A) of Arabidopsis thaliana (Mouse-ear cress).